The primary structure comprises 1414 residues: DNA-directed RNA polymerase subunit beta'' (1414 aa).

Positions 220, 293, 300, and 303 each coordinate Zn(2+).

This sequence belongs to the RNA polymerase beta' chain family. RpoC2 subfamily. In plastids the minimal PEP RNA polymerase catalytic core is composed of four subunits: alpha, beta, beta', and beta''. When a (nuclear-encoded) sigma factor is associated with the core the holoenzyme is formed, which can initiate transcription. Requires Zn(2+) as cofactor.

It is found in the plastid. It localises to the chloroplast. The enzyme catalyses RNA(n) + a ribonucleoside 5'-triphosphate = RNA(n+1) + diphosphate. In terms of biological role, DNA-dependent RNA polymerase catalyzes the transcription of DNA into RNA using the four ribonucleoside triphosphates as substrates. The protein is DNA-directed RNA polymerase subunit beta'' of Angiopteris evecta (Mule's foot fern).